The following is a 99-amino-acid chain: Integration host factor subunit alpha (99 aa).

The disordered stretch occupies residues 49–73 (FGNFDLRDKNQRPGRNPKTGEDIPI).

This sequence belongs to the bacterial histone-like protein family. As to quaternary structure, heterodimer of an alpha and a beta chain.

In terms of biological role, this protein is one of the two subunits of integration host factor, a specific DNA-binding protein that functions in genetic recombination as well as in transcriptional and translational control. In Serratia marcescens, this protein is Integration host factor subunit alpha (ihfA).